Here is a 172-residue protein sequence, read N- to C-terminus: Small ribosomal subunit protein uS5 (172 aa).

Residues 17 to 80 enclose the S5 DRBM domain; it reads LREKMISVNR…EQARRNMFKV (64 aa).

Belongs to the universal ribosomal protein uS5 family. In terms of assembly, part of the 30S ribosomal subunit. Contacts proteins S4 and S8.

With S4 and S12 plays an important role in translational accuracy. Its function is as follows. Located at the back of the 30S subunit body where it stabilizes the conformation of the head with respect to the body. The sequence is that of Small ribosomal subunit protein uS5 from Paraburkholderia phymatum (strain DSM 17167 / CIP 108236 / LMG 21445 / STM815) (Burkholderia phymatum).